The sequence spans 237 residues: MLEEDMEVAIKMVVVGNGAVGKSSMIQRYCKGIFTKDYKKTIGVDFLERQIQVNDEDVRLMLWDTAGQEEFDAITKAYYRGAQACVLVFSTTDRESFEAISSWREKVVAEVGDIPTALVQNKIDLLDDSCIKNEEAEGLAKRLKLRFYRTSVKEDLNVSEVFKYLAEKHLQKLKQQITEDPEQTHSSSNKIGVFNASVGSHLGQNSSSLNGGDVINLRPNKQRTKRTRNPFSSCSVP.

Ala19 contributes to the GDP binding site. GTP is bound by residues Val20, Gly21, Lys22, Ser23, and Ser24. The GDP site is built by Gly21, Lys22, Ser23, Ser24, and Asp37. Mg(2+) is bound at residue Ser23. The short motif at 28 to 46 is the Switch 1 element; the sequence is RYCKGIFTKDYKKTIGVDF. Position 38 (Tyr38) interacts with GTP. Lys40 is a binding site for GDP. Thr41 serves as a coordination point for GTP. Residues Thr41 and Asp64 each coordinate Mg(2+). The short motif at 65 to 84 is the Switch 2 element; it reads TAGQEEFDAITKAYYRGAQA. The GTP site is built by Gly67, Asn121, Lys122, Asp124, Ser151, Val152, and Lys153. GDP contacts are provided by Asn121, Lys122, and Asp124. Residues Val152 and Lys153 each contribute to the GDP site. Phosphoserine is present on residues Ser186 and Ser187. The interval 204–237 is disordered; sequence QNSSSLNGGDVINLRPNKQRTKRTRNPFSSCSVP. Position 234 is a cysteine methyl ester (Cys234). Cys234 carries the S-geranylgeranyl cysteine lipid modification. A propeptide spans 235–237 (removed in mature form); sequence SVP.

It belongs to the small GTPase superfamily. Rab family. Interacts with SUFU. Mg(2+) serves as cofactor. In terms of tissue distribution, detected in brain neurons (at protein level). Forebrain and midbrain.

Its subcellular location is the cell membrane. It localises to the cytoplasm. The protein localises to the endosome membrane. It is found in the cytoplasmic vesicle. The protein resides in the autophagosome. Its subcellular location is the phagosome. It localises to the phagosome membrane. The catalysed reaction is GTP + H2O = GDP + phosphate + H(+). Regulated by guanine nucleotide exchange factors (GEFs) which promote the exchange of bound GDP for free GTP. Regulated by GTPase activating proteins (GAPs) which increase the GTP hydrolysis activity. Inhibited by GDP dissociation inhibitors (GDIs). The small GTPases Rab are key regulators of intracellular membrane trafficking, from the formation of transport vesicles to their fusion with membranes. Rabs cycle between an inactive GDP-bound form and an active GTP-bound form that is able to recruit to membranes different set of downstream effectors directly responsible for vesicle formation, movement, tethering and fusion. Plays a role in autophagic vacuole assembly, and mediates defense against pathogens, such as S.aureus, by promoting their capture by autophagosomes that then merge with lysosomes. Together with SUFU, prevents nuclear import of GLI1, and thereby inhibits GLI1 transcription factor activity. Regulates GLI1 in differentiating chondrocytes. Likewise, regulates GLI3 proteolytic processing and modulates GLI2 and GLI3 transcription factor activity. This Mus musculus (Mouse) protein is Ras-related protein Rab-23.